Here is a 137-residue protein sequence, read N- to C-terminus: Transcription antitermination protein NusB (137 aa).

It belongs to the NusB family.

Its function is as follows. Involved in transcription antitermination. Required for transcription of ribosomal RNA (rRNA) genes. Binds specifically to the boxA antiterminator sequence of the ribosomal RNA (rrn) operons. The polypeptide is Transcription antitermination protein NusB (Clavibacter sepedonicus (Clavibacter michiganensis subsp. sepedonicus)).